The primary structure comprises 223 residues: Thiamine-phosphate synthase (223 aa).

Residues 45 to 49 (QYREK) and Asn-77 each bind 4-amino-2-methyl-5-(diphosphooxymethyl)pyrimidine. Mg(2+)-binding residues include Asp-78 and Asp-97. Residue Thr-116 coordinates 4-amino-2-methyl-5-(diphosphooxymethyl)pyrimidine. Position 142 to 144 (142 to 144 (SYT)) interacts with 2-[(2R,5Z)-2-carboxy-4-methylthiazol-5(2H)-ylidene]ethyl phosphate. Position 145 (Lys-145) interacts with 4-amino-2-methyl-5-(diphosphooxymethyl)pyrimidine. 2-[(2R,5Z)-2-carboxy-4-methylthiazol-5(2H)-ylidene]ethyl phosphate contacts are provided by residues Gly-173 and 193-194 (VT).

This sequence belongs to the thiamine-phosphate synthase family. Mg(2+) serves as cofactor.

The enzyme catalyses 2-[(2R,5Z)-2-carboxy-4-methylthiazol-5(2H)-ylidene]ethyl phosphate + 4-amino-2-methyl-5-(diphosphooxymethyl)pyrimidine + 2 H(+) = thiamine phosphate + CO2 + diphosphate. The catalysed reaction is 2-(2-carboxy-4-methylthiazol-5-yl)ethyl phosphate + 4-amino-2-methyl-5-(diphosphooxymethyl)pyrimidine + 2 H(+) = thiamine phosphate + CO2 + diphosphate. It catalyses the reaction 4-methyl-5-(2-phosphooxyethyl)-thiazole + 4-amino-2-methyl-5-(diphosphooxymethyl)pyrimidine + H(+) = thiamine phosphate + diphosphate. It functions in the pathway cofactor biosynthesis; thiamine diphosphate biosynthesis; thiamine phosphate from 4-amino-2-methyl-5-diphosphomethylpyrimidine and 4-methyl-5-(2-phosphoethyl)-thiazole: step 1/1. Functionally, condenses 4-methyl-5-(beta-hydroxyethyl)thiazole monophosphate (THZ-P) and 2-methyl-4-amino-5-hydroxymethyl pyrimidine pyrophosphate (HMP-PP) to form thiamine monophosphate (TMP). The polypeptide is Thiamine-phosphate synthase (Dictyoglomus thermophilum (strain ATCC 35947 / DSM 3960 / H-6-12)).